A 357-amino-acid polypeptide reads, in one-letter code: MNSFGKRLIMTTFGESHGKAIGCVLDGVPAGLDIDETFIQNELDRRRPGKSKFATARKELDEVQILSGVFEGRSTGTPIAMVIFNKDQKSRDYSNIKDIFRPGHADFTYWHKYGIRDYRGGGRSSARETAARVAAGAVAKLLLKEFGIEVEAGVCEVAGIEAKEFDFDYAKTSEIFALDPYVETLQKEAILKAKEAHDSVGGAVLVRATNLPVGLGEPIYYKLDAVLAEALMSINAAKAVDIGLGREASRLYGSQNNDQITKEGFISNNAGGILGGISNGEDVIAKVWFKPTPSIFQKQRSIDVNGNEVEVELKGRHDPFVAARGSVVAEAMMALVIADMLLLNATSQLSHLKKVYL.

An NADP(+)-binding site is contributed by Arg46. Residues 123-125, 235-236, Gly275, 290-294, and Arg316 each bind FMN; these read RSS, NA, and KPTPS.

The protein belongs to the chorismate synthase family. In terms of assembly, homotetramer. FMNH2 serves as cofactor.

The enzyme catalyses 5-O-(1-carboxyvinyl)-3-phosphoshikimate = chorismate + phosphate. Its pathway is metabolic intermediate biosynthesis; chorismate biosynthesis; chorismate from D-erythrose 4-phosphate and phosphoenolpyruvate: step 7/7. Its function is as follows. Catalyzes the anti-1,4-elimination of the C-3 phosphate and the C-6 proR hydrogen from 5-enolpyruvylshikimate-3-phosphate (EPSP) to yield chorismate, which is the branch point compound that serves as the starting substrate for the three terminal pathways of aromatic amino acid biosynthesis. This reaction introduces a second double bond into the aromatic ring system. This is Chorismate synthase from Nitratiruptor sp. (strain SB155-2).